Reading from the N-terminus, the 49-residue chain is Protein 19.5 (49 aa).

The signal sequence occupies residues 1–23; sequence MFRLLLNLLRHRVTYRFLVVLCA.

In Escherichia phage T7 (Bacteriophage T7), this protein is Protein 19.5.